A 630-amino-acid polypeptide reads, in one-letter code: 1-deoxy-D-xylulose-5-phosphate synthase (630 aa).

Thiamine diphosphate is bound by residues H72 and 113 to 115 (GHS). D144 provides a ligand contact to Mg(2+). Residues 145–146 (GA), N173, Y284, and E367 contribute to the thiamine diphosphate site. Mg(2+) is bound at residue N173.

The protein belongs to the transketolase family. DXPS subfamily. Homodimer. The cofactor is Mg(2+). It depends on thiamine diphosphate as a cofactor.

It catalyses the reaction D-glyceraldehyde 3-phosphate + pyruvate + H(+) = 1-deoxy-D-xylulose 5-phosphate + CO2. It participates in metabolic intermediate biosynthesis; 1-deoxy-D-xylulose 5-phosphate biosynthesis; 1-deoxy-D-xylulose 5-phosphate from D-glyceraldehyde 3-phosphate and pyruvate: step 1/1. Functionally, catalyzes the acyloin condensation reaction between C atoms 2 and 3 of pyruvate and glyceraldehyde 3-phosphate to yield 1-deoxy-D-xylulose-5-phosphate (DXP). The polypeptide is 1-deoxy-D-xylulose-5-phosphate synthase (Bacillus cereus (strain G9842)).